Here is a 513-residue protein sequence, read N- to C-terminus: 2-isopropylmalate synthase (513 aa).

The Pyruvate carboxyltransferase domain occupies 5–268 (LIIFDTTLRD…EVGIDTTQIV (264 aa)). Mn(2+) is bound by residues D14, H202, H204, and N239. The regulatory domain stretch occupies residues 394–513 (RLLSLEQQSA…SKNERVAAQG (120 aa)).

It belongs to the alpha-IPM synthase/homocitrate synthase family. LeuA type 1 subfamily. As to quaternary structure, homodimer. Requires Mn(2+) as cofactor.

Its subcellular location is the cytoplasm. It catalyses the reaction 3-methyl-2-oxobutanoate + acetyl-CoA + H2O = (2S)-2-isopropylmalate + CoA + H(+). It participates in amino-acid biosynthesis; L-leucine biosynthesis; L-leucine from 3-methyl-2-oxobutanoate: step 1/4. Catalyzes the condensation of the acetyl group of acetyl-CoA with 3-methyl-2-oxobutanoate (2-ketoisovalerate) to form 3-carboxy-3-hydroxy-4-methylpentanoate (2-isopropylmalate). This is 2-isopropylmalate synthase from Methylibium petroleiphilum (strain ATCC BAA-1232 / LMG 22953 / PM1).